Consider the following 785-residue polypeptide: Protein SEY1 (785 aa).

The Cytoplasmic portion of the chain corresponds to 1 to 690; that stretch reads MTDLEVSAIQ…KRSVINSKTE (690 aa). Residues 40–266 form the GB1/RHD3-type G domain; it reads GLNYHIVSVF…SEDQLFNEGY (227 aa). A GTP-binding site is contributed by 50–57; the sequence is GSQSTGKS. A coiled-coil region spans residues 451-479; the sequence is PKLRELEEELSNLRTELVNKEQENIKTKI. The helical transmembrane segment at 691–711 threads the bilayer; the sequence is VPLYIYALLLVLGWNEFMIIL. Over 712 to 714 the chain is Lumenal; the sequence is RNP. A helical transmembrane segment spans residues 715–735; that stretch reads LLITLLLIGLTGLYLGYKTKL. Residues 736 to 785 are Cytoplasmic-facing; it reads LGPIVQVVQAMIQELQDQAKNKLRDVLVSEPEAPSQVRIGKEVDATKDED.

The protein belongs to the TRAFAC class dynamin-like GTPase superfamily. GB1/RHD3 GTPase family. RHD3 subfamily.

Its subcellular location is the endoplasmic reticulum membrane. Its function is as follows. Cooperates with the reticulon proteins and tubule-shaping DP1 family proteins to generate and maintain the structure of the tubular endoplasmic reticulum network. Has GTPase activity, which is required for its function in ER organization. The chain is Protein SEY1 from Komagataella phaffii (strain GS115 / ATCC 20864) (Yeast).